The sequence spans 153 residues: Ergochrome gene cluster protein CPUR_05425 (153 aa).

It participates in pigment biosynthesis. In terms of biological role, part of the ergochrome gene cluster responsible for the typical purple-black color of the ergot sclerotia. The ergochrome gene cluster produces several ergot pigments including the yellow ergochrome secalonic acid and its derivatives, as well as the red anthraquinones endocrocin and clavorubin. The pathway begins with the synthesis of atrochrysone thioester by the polyketide synthase (PKS) CPUR_05437. The atrochrysone carboxyl ACP thioesterase CPUR_05436 then breaks the thioester bond and releases the atrochrysone carboxylic acid from CPUR_05437. The atrochrysone carboxylic acid is then converted to atrochrysone which is further transformed into emodin anthrone. The next step is performed by the anthrone oxygenase CPUR_05434 that catalyzes the oxidation of emodinanthrone to emodin. Emodin is further modified to yield monodictyphenone via several steps involving CPUR_05427, CPUR_05428, CPUR_05429 and CPUR_05430. The short chain dehydrogenase/reductase CPUR_05418 then catalyzes the C-5 ketoreduction to give the xanthone skeleton of the monomeric units. Ergochromes formation requires further dimerization steps of different xanthone units, probably catalyzed by the cytochrome P450 monooxygenase CPUR_05419. CPUR_05425, CPUR_05426 and CPUR_05431 are unique to Claviceps, thus it is likely that they are involved in further modification of xanthone units or in their dimerization. The yellow ergochromes and the red anthraquinone pigments endocrocin and clavorubin are products from the same PKS derived precursors and the latter are likely shunt products in the pathway of xanthone biosynthesis. It is proposed that atrochrysone carboxylic acid released from the PKS CPUR_05437 can also be converted to endocrocin anthrone which is further oxidized into endocrocin by CPUR_05435. Endocrocin could be then modified to clavorubin, possibly by CPUR_05423 and CPUR_05431. Clavorubin is the principal anthraquinone metabolite produced by the cluster with a much higher yield compared to endocrocin. This Claviceps purpurea (strain 20.1) (Ergot fungus) protein is Ergochrome gene cluster protein CPUR_05425.